A 350-amino-acid chain; its full sequence is Biotin synthase (350 aa).

The Radical SAM core domain maps to 38 to 256 (NHVQVSTLLS…IAVARIMMPE (219 aa)). [4Fe-4S] cluster contacts are provided by Cys53, Cys57, and Cys60. The [2Fe-2S] cluster site is built by Cys97, Cys128, Cys188, and Arg260.

This sequence belongs to the radical SAM superfamily. Biotin synthase family. In terms of assembly, homodimer. The cofactor is [4Fe-4S] cluster. Requires [2Fe-2S] cluster as cofactor.

It catalyses the reaction (4R,5S)-dethiobiotin + (sulfur carrier)-SH + 2 reduced [2Fe-2S]-[ferredoxin] + 2 S-adenosyl-L-methionine = (sulfur carrier)-H + biotin + 2 5'-deoxyadenosine + 2 L-methionine + 2 oxidized [2Fe-2S]-[ferredoxin]. Its pathway is cofactor biosynthesis; biotin biosynthesis; biotin from 7,8-diaminononanoate: step 2/2. Catalyzes the conversion of dethiobiotin (DTB) to biotin by the insertion of a sulfur atom into dethiobiotin via a radical-based mechanism. This chain is Biotin synthase, found in Aliivibrio fischeri (strain MJ11) (Vibrio fischeri).